We begin with the raw amino-acid sequence, 188 residues long: MELGNQPGQGNRPEIELEWYQYLQNTVGEALSNYGWYILLGCIVIYFLIQKLSANFTRAVASTRTTVTDPDEIVRRQEAVAAARMRMQVELNAQAELYKQKQVQLQEEKRRRNIETWDRMQEGKSSKVGCRLVQDASPRTSTSSSAPKPKPESRPLRDSGYNPLTGGGGGTCAWRPGRRGPSSGGSUG.

The chain crosses the membrane as a helical span at residues 29-49 (EALSNYGWYILLGCIVIYFLI). Residues 116-125 (TWDRMQEGKS) are compositionally biased toward basic and acidic residues. The interval 116–188 (TWDRMQEGKS…RGPSSGGSUG (73 aa)) is disordered. Residues 136–147 (ASPRTSTSSSAP) show a composition bias toward low complexity. Residue Sec-187 is a non-standard amino acid, selenocysteine.

It belongs to the selenoprotein S family.

It localises to the endoplasmic reticulum membrane. The protein localises to the cytoplasm. Involved in the degradation process of misfolded endoplasmic reticulum (ER) luminal proteins. Participates in the transfer of misfolded proteins from the ER to the cytosol, where they are destroyed by the proteasome in a ubiquitin-dependent manner. The sequence is that of Selenoprotein S B (vimp-b) from Xenopus laevis (African clawed frog).